Here is a 313-residue protein sequence, read N- to C-terminus: Interferon-inducible double-stranded RNA-dependent protein kinase activator A (313 aa).

A disordered region spans residues 1–20 (MSHSRHRAEAPPLQREDSGT). 3 sufficient for self-association and interaction with TARBP2 regions span residues 1-103 (MSHS…KANA), 102-195 (NASI…FSNI), and 195-313 (ISPE…AERK). Phosphoserine is present on Ser-18. DRBM domains lie at 34 to 101 (TPIQ…ILKA), 126 to 194 (NPIG…KFSN), and 240 to 308 (DYIQ…YLKI). Phosphoserine occurs at positions 167, 246, and 287.

It belongs to the PRKRA family. In terms of assembly, homodimer. Interacts with EIF2AK2/PKR through its DRBM domains. Interacts with DICER1, AGO2 and TARBP2. Also able to interact with dsRNA. Interacts with UBC9. Forms a complex with UBC9 and p53/TP53. Interacts with DUS2L (via DRBM domain). Phosphorylated at Ser-246 in unstressed cells and at Ser-287 in stressed cells. Phosphorylation at Ser-246 appears to be a prerequisite for subsequent phosphorylation at Ser-287. Phosphorylation at Ser-246 and Ser-287 are necessary for activation of EIF2AK2/PKR under conditions of stress.

The protein localises to the cytoplasm. The protein resides in the perinuclear region. Activates EIF2AK2/PKR in the absence of double-stranded RNA (dsRNA), leading to phosphorylation of EIF2S1/EFI2-alpha and inhibition of translation and induction of apoptosis. Required for siRNA production by DICER1 and for subsequent siRNA-mediated post-transcriptional gene silencing. Does not seem to be required for processing of pre-miRNA to miRNA by DICER1. Promotes UBC9-p53/TP53 association, sumoylation and phosphorylation of p53/TP53 at 'Lys-386' at 'Ser-392' respectively and enhances its activity in a EIF2AK2/PKR-dependent manner. In Rattus norvegicus (Rat), this protein is Interferon-inducible double-stranded RNA-dependent protein kinase activator A (Prkra).